The following is a 284-amino-acid chain: Tryptophan 2,3-dioxygenase (284 aa).

Substrate is bound by residues Phe51–His55, Tyr113, and Arg117. His240 is a heme binding site. Thr254 is a substrate binding site.

The protein belongs to the tryptophan 2,3-dioxygenase family. Homotetramer. Requires heme as cofactor.

It carries out the reaction L-tryptophan + O2 = N-formyl-L-kynurenine. It functions in the pathway amino-acid degradation; L-tryptophan degradation via kynurenine pathway; L-kynurenine from L-tryptophan: step 1/2. In terms of biological role, heme-dependent dioxygenase that catalyzes the oxidative cleavage of the L-tryptophan (L-Trp) pyrrole ring and converts L-tryptophan to N-formyl-L-kynurenine. Catalyzes the oxidative cleavage of the indole moiety. The polypeptide is Tryptophan 2,3-dioxygenase (Rhodococcus jostii (strain RHA1)).